The chain runs to 130 residues: Large-conductance mechanosensitive channel (130 aa).

Topologically, residues M1 to I14 are cytoplasmic. Residues V15–V43 traverse the membrane as a helical segment. Residues G44–K65 lie on the Extracellular side of the membrane. The chain crosses the membrane as a helical span at residues Y66–I85. The Cytoplasmic segment spans residues V86–E130.

Belongs to the MscL family. In terms of assembly, homopentamer.

Its subcellular location is the cell membrane. Its function is as follows. Channel that opens in response to stretch forces in the membrane lipid bilayer. Forms a nonselective ion channel with a conductance of about 4 nanosiemens. May participate in the regulation of osmotic pressure changes within the cell. The chain is Large-conductance mechanosensitive channel from Bacillus subtilis (strain 168).